The sequence spans 72 residues: Translation initiation factor IF-1 (72 aa).

One can recognise an S1-like domain in the interval 1–72; that stretch reads MAKEGAIEVE…TRGRIVYRYK (72 aa).

Belongs to the IF-1 family. In terms of assembly, component of the 30S ribosomal translation pre-initiation complex which assembles on the 30S ribosome in the order IF-2 and IF-3, IF-1 and N-formylmethionyl-tRNA(fMet); mRNA recruitment can occur at any time during PIC assembly.

It localises to the cytoplasm. Its function is as follows. One of the essential components for the initiation of protein synthesis. Stabilizes the binding of IF-2 and IF-3 on the 30S subunit to which N-formylmethionyl-tRNA(fMet) subsequently binds. Helps modulate mRNA selection, yielding the 30S pre-initiation complex (PIC). Upon addition of the 50S ribosomal subunit IF-1, IF-2 and IF-3 are released leaving the mature 70S translation initiation complex. This chain is Translation initiation factor IF-1, found in Corynebacterium glutamicum (strain R).